The primary structure comprises 358 residues: Histidinol-phosphate aminotransferase (358 aa).

The residue at position 221 (lysine 221) is an N6-(pyridoxal phosphate)lysine.

The protein belongs to the class-II pyridoxal-phosphate-dependent aminotransferase family. Histidinol-phosphate aminotransferase subfamily. In terms of assembly, homodimer. Pyridoxal 5'-phosphate is required as a cofactor.

It catalyses the reaction L-histidinol phosphate + 2-oxoglutarate = 3-(imidazol-4-yl)-2-oxopropyl phosphate + L-glutamate. Its pathway is amino-acid biosynthesis; L-histidine biosynthesis; L-histidine from 5-phospho-alpha-D-ribose 1-diphosphate: step 7/9. The chain is Histidinol-phosphate aminotransferase from Caldicellulosiruptor saccharolyticus (strain ATCC 43494 / DSM 8903 / Tp8T 6331).